The sequence spans 315 residues: Olfactory receptor 3A1 (315 aa).

The Extracellular portion of the chain corresponds to methionine 1–proline 28. N-linked (GlcNAc...) asparagine glycosylation is present at asparagine 8. Residues valine 29–valine 52 traverse the membrane as a helical segment. Residues leucine 53–threonine 60 lie on the Cytoplasmic side of the membrane. The chain crosses the membrane as a helical span at residues proline 61–proline 82. Residues serine 83–glutamine 103 lie on the Extracellular side of the membrane. A disulfide bond links cysteine 100 and cysteine 192. The helical transmembrane segment at leucine 104 to tyrosine 123 threads the bilayer. Residues aspartate 124–valine 143 lie on the Cytoplasmic side of the membrane. The chain crosses the membrane as a helical span at residues glutamine 144–threonine 161. The Extracellular portion of the chain corresponds to histidine 162–glutamate 199. A helical transmembrane segment spans residues leucine 200–histidine 223. The Cytoplasmic portion of the chain corresponds to valine 224 to alanine 240. A helical membrane pass occupies residues phenylalanine 241–arginine 264. Topologically, residues leucine 265 to lysine 275 are extracellular. A helical membrane pass occupies residues alanine 276–phenylalanine 295. Residues arginine 296–alanine 315 are Cytoplasmic-facing.

It belongs to the G-protein coupled receptor 1 family.

The protein localises to the cell membrane. Functionally, odorant receptor. This chain is Olfactory receptor 3A1 (OR3A1), found in Gorilla gorilla gorilla (Western lowland gorilla).